The primary structure comprises 551 residues: Probable metalloreductase AIM14 (551 aa).

The next 7 helical transmembrane spans lie at 25–45, 67–87, 100–117, 138–155, 172–192, 199–221, and 225–247; these read GIII…VKFI, PTWM…GANI, RYGR…YLIL, KWLS…AIGY, FLNF…IVSI, YYSL…IIFH, and GVTI…LRFY. Positions 102–217 constitute a Ferric oxidoreductase domain; that stretch reads GRIAYCLLPL…NITAWSMVVL (116 aa). The 123-residue stretch at 247 to 369 folds into the FAD-binding FR-type domain; the sequence is YKSYPVNNLK…GGSGISFGLP (123 aa). The segment at 440 to 492 is disordered; sequence QDESHAKVEQTQGEEEVDGLLNQDENGIPLQSMKKESFPKKEEGEDEEKSSKD. Residues 472–492 show a composition bias toward basic and acidic residues; sequence MKKESFPKKEEGEDEEKSSKD.

The protein belongs to the ferric reductase (FRE) family. AIM14 subfamily.

It localises to the membrane. Probable cell surface metalloreductase. May be involved in iron or copper homeostasis. This is Probable metalloreductase AIM14 (AIM14) from Candida tropicalis (strain ATCC MYA-3404 / T1) (Yeast).